The following is a 405-amino-acid chain: L-carnitine CoA-transferase (405 aa).

2 residues coordinate CoA: Lys97 and Arg104. Catalysis depends on Asp169, which acts as the Nucleophile.

This sequence belongs to the CoA-transferase III family. CaiB subfamily. As to quaternary structure, homodimer.

Its subcellular location is the cytoplasm. The catalysed reaction is crotonobetainyl-CoA + (R)-carnitine = crotonobetaine + (R)-carnitinyl-CoA. The enzyme catalyses 4-(trimethylamino)butanoyl-CoA + (R)-carnitine = (R)-carnitinyl-CoA + 4-(trimethylamino)butanoate. The protein operates within amine and polyamine metabolism; carnitine metabolism. Catalyzes the reversible transfer of the CoA moiety from gamma-butyrobetainyl-CoA to L-carnitine to generate L-carnitinyl-CoA and gamma-butyrobetaine. Is also able to catalyze the reversible transfer of the CoA moiety from gamma-butyrobetainyl-CoA or L-carnitinyl-CoA to crotonobetaine to generate crotonobetainyl-CoA. The polypeptide is L-carnitine CoA-transferase (Escherichia coli O127:H6 (strain E2348/69 / EPEC)).